Here is a 616-residue protein sequence, read N- to C-terminus: Dihydroxy-acid dehydratase (616 aa).

Aspartate 81 contacts Mg(2+). Cysteine 122 is a [2Fe-2S] cluster binding site. Mg(2+) is bound by residues aspartate 123 and lysine 124. The residue at position 124 (lysine 124) is an N6-carboxylysine. Cysteine 195 is a [2Fe-2S] cluster binding site. Residue glutamate 491 participates in Mg(2+) binding. Residue serine 517 is the Proton acceptor of the active site.

The protein belongs to the IlvD/Edd family. As to quaternary structure, homodimer. It depends on [2Fe-2S] cluster as a cofactor. The cofactor is Mg(2+).

The enzyme catalyses (2R)-2,3-dihydroxy-3-methylbutanoate = 3-methyl-2-oxobutanoate + H2O. It carries out the reaction (2R,3R)-2,3-dihydroxy-3-methylpentanoate = (S)-3-methyl-2-oxopentanoate + H2O. The protein operates within amino-acid biosynthesis; L-isoleucine biosynthesis; L-isoleucine from 2-oxobutanoate: step 3/4. It functions in the pathway amino-acid biosynthesis; L-valine biosynthesis; L-valine from pyruvate: step 3/4. Its function is as follows. Functions in the biosynthesis of branched-chain amino acids. Catalyzes the dehydration of (2R,3R)-2,3-dihydroxy-3-methylpentanoate (2,3-dihydroxy-3-methylvalerate) into 2-oxo-3-methylpentanoate (2-oxo-3-methylvalerate) and of (2R)-2,3-dihydroxy-3-methylbutanoate (2,3-dihydroxyisovalerate) into 2-oxo-3-methylbutanoate (2-oxoisovalerate), the penultimate precursor to L-isoleucine and L-valine, respectively. The protein is Dihydroxy-acid dehydratase of Salmonella schwarzengrund (strain CVM19633).